Consider the following 166-residue polypeptide: Urease accessory protein UreE (166 aa).

The tract at residues 133–154 (QPEHGAYGGGHHHSRHGDEDFN) is disordered.

It belongs to the UreE family.

It is found in the cytoplasm. Its function is as follows. Involved in urease metallocenter assembly. Binds nickel. Probably functions as a nickel donor during metallocenter assembly. This chain is Urease accessory protein UreE, found in Pseudomonas fluorescens (strain SBW25).